A 162-amino-acid chain; its full sequence is Dihydrofolate reductase (162 aa).

The 159-residue stretch at 3–161 (KITLIAACAE…TRYAFVHYLR (159 aa)) folds into the DHFR domain. 7-9 (IAA) contacts substrate. Residues 8 to 9 (AA) and 16 to 21 (IGAGNA) each bind NADP(+). Residue Asp-29 participates in substrate binding. 45–48 (GRKT) is a binding site for NADP(+). Arg-60 serves as a coordination point for substrate. NADP(+) is bound by residues 65 to 68 (ISRQ) and 98 to 103 (MGGAQI). Thr-117 is a substrate binding site.

This sequence belongs to the dihydrofolate reductase family.

It catalyses the reaction (6S)-5,6,7,8-tetrahydrofolate + NADP(+) = 7,8-dihydrofolate + NADPH + H(+). The protein operates within cofactor biosynthesis; tetrahydrofolate biosynthesis; 5,6,7,8-tetrahydrofolate from 7,8-dihydrofolate: step 1/1. Functionally, key enzyme in folate metabolism. Catalyzes an essential reaction for de novo glycine and purine synthesis, and for DNA precursor synthesis. The protein is Dihydrofolate reductase (folA) of Neisseria meningitidis serogroup B (strain ATCC BAA-335 / MC58).